Consider the following 170-residue polypeptide: Urease accessory protein UreE (170 aa).

The protein belongs to the UreE family.

The protein resides in the cytoplasm. Involved in urease metallocenter assembly. Binds nickel. Probably functions as a nickel donor during metallocenter assembly. The sequence is that of Urease accessory protein UreE from Helicobacter pylori (strain HPAG1).